The primary structure comprises 210 residues: MSQSYELTAEARERVGKGSARAIRRNGKIPAVIYGDKQPPLSITLPYKEVFLRIHAGGFRTTVATIDLNGEKIQVLPKDYQLDPVRGFAMHVDFLRVGKNTVVTVNVPVHFINDEKAPGIKRGGVLNIVRHEVEFTCPANAIPDFIEVDLTGLDIGDSVHISAVKLPEGIVPTITDRDFTIATVAAPAGLKSEGAEGGEAEAGQAEEGEE.

A disordered region spans residues leucine 190–glutamate 210. The segment covering glutamate 196–glutamate 210 has biased composition (acidic residues).

The protein belongs to the bacterial ribosomal protein bL25 family. CTC subfamily. Part of the 50S ribosomal subunit; part of the 5S rRNA/L5/L18/L25 subcomplex. Contacts the 5S rRNA. Binds to the 5S rRNA independently of L5 and L18.

In terms of biological role, this is one of the proteins that binds to the 5S RNA in the ribosome where it forms part of the central protuberance. The polypeptide is Large ribosomal subunit protein bL25 (Chelativorans sp. (strain BNC1)).